The primary structure comprises 359 residues: Guanine nucleotide-binding protein G(o) subunit alpha (359 aa).

The interval 1-26 is disordered; sequence MGGCVSATPEEREAKTRSSVIDRQQR. Residue Gly-2 is the site of N-myristoyl glycine attachment. The S-palmitoyl cysteine moiety is linked to residue Cys-4. Positions 34 to 359 constitute a G-alpha domain; that stretch reads NTIKILLLGA…RENLEAANLL (326 aa). Positions 37–50 are G1 motif; sequence KILLLGAGESGKST. GTP contacts are provided by residues 42-49, 178-184, 203-207, 272-275, and Ala-331; these read GAGESGKS, LRSRVQT, DVGGQ, and NKAD. Mg(2+)-binding residues include Ser-49 and Thr-184. The G2 motif stretch occupies residues 176 to 184; sequence DVLRSRVQT. Residues 199–208 form a G3 motif region; the sequence is YRVVDVGGQR. A G4 motif region spans residues 268 to 275; the sequence is ILFLNKAD. The G5 motif stretch occupies residues 329–334; the sequence is TTATDT.

This sequence belongs to the G-alpha family. G(i/o/t/z) subfamily. G proteins are composed of 3 units; alpha, beta and gamma. The alpha chain contains the guanine nucleotide binding site.

In terms of biological role, guanine nucleotide-binding proteins (G proteins) are involved as modulators or transducers in various transmembrane signaling systems. The G(o) protein function is not clear. The sequence is that of Guanine nucleotide-binding protein G(o) subunit alpha from Geodia cydonium (Sponge).